The primary structure comprises 687 residues: Methionine--tRNA ligase (687 aa).

The 'HIGH' region motif lies at 14-24 (PYANGYIHLGH). Zn(2+) contacts are provided by cysteine 145, cysteine 148, cysteine 158, and cysteine 161. The short motif at 329–333 (KMSKS) is the 'KMSKS' region element. Lysine 332 provides a ligand contact to ATP. Residues 585–687 (DFDKVDLRIG…DGAQVGQRVK (103 aa)) form the tRNA-binding domain.

This sequence belongs to the class-I aminoacyl-tRNA synthetase family. MetG type 1 subfamily. Homodimer. It depends on Zn(2+) as a cofactor.

It localises to the cytoplasm. The catalysed reaction is tRNA(Met) + L-methionine + ATP = L-methionyl-tRNA(Met) + AMP + diphosphate. Its function is as follows. Is required not only for elongation of protein synthesis but also for the initiation of all mRNA translation through initiator tRNA(fMet) aminoacylation. This Bdellovibrio bacteriovorus (strain ATCC 15356 / DSM 50701 / NCIMB 9529 / HD100) protein is Methionine--tRNA ligase.